A 535-amino-acid chain; its full sequence is T-complex protein 1 subunit zeta 1 (535 aa).

This sequence belongs to the TCP-1 chaperonin family. In terms of assembly, heterooligomeric complex of about 850 to 900 kDa that forms two stacked rings, 12 to 16 nm in diameter.

The protein resides in the cytoplasm. Its function is as follows. Molecular chaperone; assists the folding of proteins upon ATP hydrolysis. Known to play a role, in vitro, in the folding of actin and tubulin. This is T-complex protein 1 subunit zeta 1 from Arabidopsis thaliana (Mouse-ear cress).